A 442-amino-acid chain; its full sequence is O-acetyl-L-homoserine sulfhydrylase (442 aa).

The interval 1 to 32 (MVGPSGESMPRNFKPETIALHGGQEPDPTTTS) is disordered. Lys216 carries the post-translational modification N6-(pyridoxal phosphate)lysine.

Belongs to the trans-sulfuration enzymes family. It depends on pyridoxal 5'-phosphate as a cofactor.

The catalysed reaction is O-acetyl-L-homoserine + hydrogen sulfide = L-homocysteine + acetate. It functions in the pathway amino-acid biosynthesis; L-methionine biosynthesis via de novo pathway; L-homocysteine from O-acetyl-L-homoserine: step 1/1. Its activity is regulated as follows. Feedback inhibited at very high concentrations of methionine or S-adenosylmethionine. Catalyzes the conversion of O-acetyl-L-homoserine (OAH) into homocysteine in the methionine biosynthesis pathway. Can also use O-succinyl-homoserine (OSH), although at low efficiency. This is O-acetyl-L-homoserine sulfhydrylase from Leptospira meyeri.